Here is a 141-residue protein sequence, read N- to C-terminus: Calcium-binding protein SPEC 2D (141 aa).

EF-hand domains are found at residues D10–V42, G43–L72, D73–Q107, and I108–C141. Ca(2+) is bound by residues D23, N25, D27, and N29. Residues D84, D86, K90, D95, D121, D125, K127, and E132 each coordinate Ca(2+).

Found in cell lineages giving rise to the aboral ectoderm, a squamous epithelium covering the surface of the late stage embryo and larva.

Functionally, calcium-binding protein involved in larval development and metamorphosis. Likely to function as calcium buffers mediating the transport of calcium from the sea water to the blastocoel where calcium is required for skeleton formation. In Strongylocentrotus purpuratus (Purple sea urchin), this protein is Calcium-binding protein SPEC 2D (SPEC2D).